The sequence spans 120 residues: Small ribosomal subunit protein uS13 (120 aa).

Positions 96-120 (PCRGQRTRTNARTRKGPRKAIAGKK) are disordered.

The protein belongs to the universal ribosomal protein uS13 family. Part of the 30S ribosomal subunit. Forms a loose heterodimer with protein S19. Forms two bridges to the 50S subunit in the 70S ribosome.

Functionally, located at the top of the head of the 30S subunit, it contacts several helices of the 16S rRNA. In the 70S ribosome it contacts the 23S rRNA (bridge B1a) and protein L5 of the 50S subunit (bridge B1b), connecting the 2 subunits; these bridges are implicated in subunit movement. Contacts the tRNAs in the A and P-sites. In Chromobacterium violaceum (strain ATCC 12472 / DSM 30191 / JCM 1249 / CCUG 213 / NBRC 12614 / NCIMB 9131 / NCTC 9757 / MK), this protein is Small ribosomal subunit protein uS13.